Reading from the N-terminus, the 89-residue chain is Small ribosomal subunit protein uS15 (89 aa).

It belongs to the universal ribosomal protein uS15 family. As to quaternary structure, part of the 30S ribosomal subunit. Forms a bridge to the 50S subunit in the 70S ribosome, contacting the 23S rRNA.

Functionally, one of the primary rRNA binding proteins, it binds directly to 16S rRNA where it helps nucleate assembly of the platform of the 30S subunit by binding and bridging several RNA helices of the 16S rRNA. Forms an intersubunit bridge (bridge B4) with the 23S rRNA of the 50S subunit in the ribosome. The sequence is that of Small ribosomal subunit protein uS15 from Bifidobacterium longum (strain DJO10A).